An 85-amino-acid polypeptide reads, in one-letter code: UPF0297 protein CD630_12830 (85 aa).

It belongs to the UPF0297 family.

This chain is UPF0297 protein CD630_12830, found in Clostridioides difficile (strain 630) (Peptoclostridium difficile).